A 208-amino-acid chain; its full sequence is Uridine kinase (208 aa).

ATP is bound at residue 11 to 18; the sequence is GGTGSGKS.

The protein belongs to the uridine kinase family.

It is found in the cytoplasm. It catalyses the reaction uridine + ATP = UMP + ADP + H(+). The catalysed reaction is cytidine + ATP = CMP + ADP + H(+). It participates in pyrimidine metabolism; CTP biosynthesis via salvage pathway; CTP from cytidine: step 1/3. The protein operates within pyrimidine metabolism; UMP biosynthesis via salvage pathway; UMP from uridine: step 1/1. The polypeptide is Uridine kinase (Alkaliphilus metalliredigens (strain QYMF)).